Here is a 999-residue protein sequence, read N- to C-terminus: MEQVQDEIWKLSTLDAWEMVNKNTEVVFDEIPEPETLSEMKRHPLYSNIFNADNNTTSFTEQIETSETSKTQDSEGNKVDKNLKENKSIRRKRSIDNDYELSNVKRNDITSGKNREFENEHHPASDTSSWRELPSIPTLEELTSKSVELPSNNIYGGYKSFEDYLSIHYRLLREDAVSPLRESVLRYKVNPNYITGSSLAVYDHVRIDGYTISSSVIAAKLSFSVRAKKKIKWATSRRLISGSLVLLSNDDFQTFRIGTVCARPLSGLNKHPHEIDVKFEDISISLDPREEYVMIEATSGYWEAYKHVLRSLQRLSASTFPMKDYLVHCKSNQETAKHIQNNPRIRINSILKNNSQKIVNALEPFGPGEYILDSSQLKAYQSMLTKRLSIIQGPPGTGKSFVTLKAIETLLENTHSHVLPILVACQTNHAVDQILIRLLHQGASVMRLGSRTKDPEIAAVTIFQKAKHTKHSFKAAYNEIRHKKQRLIKQITNIMHNFNLEFVTLSYLHSKGIITTSQLESLRNNTEWISSVAENGEKTEEELISIWLGDAKVELITPSEITDGFEEELQIDPEKLEEIQKEAEDSGALMEEELRGKFINLRCKYLFSKLTTLHEKEIDTLLTIPNIWDIPEYSRGIIYCRWLESAYAAAEKELNRLYRFYLKVDRERIGFSNKRAAILLRGANVIGMTTTGLNKYRDILERINPKICFIEEAADVLEGPIIPAVFPSLEQLVLIGDHKQLRPGCSTYALRQDPFNLSISMFERLVENDMEYTRLTMQRRMHPQIRRLVSSVYEDLSDYEITKYWPSIPGMGEIRRFFLTHSRIEDNDGFASKINLFEAQMLVQFAVYLINNGVEPQKITCLTFYAAQKDLIERLLSESLNREKHFIKVATVDGYQGEENDVVLLSLVRNNDRTEVGFLSSPHRVCVSLSRARRGLFIFGNAQLVAESNPLWWDAINTLMNDETIQGLGDHLPLFTKDGTIYVNDPVELLDVNMRLTRK.

The disordered stretch occupies residues 61–90 (EQIETSETSKTQDSEGNKVDKNLKENKSIR). Over residues 70–88 (KTQDSEGNKVDKNLKENKS) the composition is skewed to basic and acidic residues. S94 bears the Phosphoserine mark. Over residues 106 to 124 (RNDITSGKNREFENEHHPA) the composition is skewed to basic and acidic residues. The disordered stretch occupies residues 106-131 (RNDITSGKNREFENEHHPASDTSSWR). Residue 393–400 (GPPGTGKS) participates in ATP binding.

Cid12, hrr1 and rdp1 interact forming the RNA-directed RNA polymerase complex (RDRC). The RDRC complex interacts with the RITS complex via interaction between ago1 and hrr1. Clr4 has a role in mediating this interaction.

It localises to the cytoplasm. Its subcellular location is the nucleus. The enzyme catalyses ATP + H2O = ADP + phosphate + H(+). Has a role in the RNA interference (RNAi) pathway which is important for heterochromatin formation and accurate chromosome segregation. A member of the RNA-directed RNA polymerase complex (RDRC) which is involved in the generation of small interfering RNAs (siRNAs) and mediate their association with the RNA-induced transcriptional silencing (RITS) complex. RITS acts as a priming complex for dsRNA synthesis at the site of non-coding centromeric RNA. This chain is Helicase required for RNAi-mediated heterochromatin assembly 1 (hrr1), found in Schizosaccharomyces pombe (strain 972 / ATCC 24843) (Fission yeast).